Reading from the N-terminus, the 465-residue chain is 3-isopropylmalate dehydratase large subunit (465 aa).

3 residues coordinate [4Fe-4S] cluster: cysteine 347, cysteine 407, and cysteine 410.

It belongs to the aconitase/IPM isomerase family. LeuC type 1 subfamily. As to quaternary structure, heterodimer of LeuC and LeuD. The cofactor is [4Fe-4S] cluster.

It catalyses the reaction (2R,3S)-3-isopropylmalate = (2S)-2-isopropylmalate. It participates in amino-acid biosynthesis; L-leucine biosynthesis; L-leucine from 3-methyl-2-oxobutanoate: step 2/4. In terms of biological role, catalyzes the isomerization between 2-isopropylmalate and 3-isopropylmalate, via the formation of 2-isopropylmaleate. The polypeptide is 3-isopropylmalate dehydratase large subunit (Aeromonas salmonicida (strain A449)).